The sequence spans 116 residues: Endocuticle structural glycoprotein SgAbd-4 (116 aa).

Position 1 is a pyrrolidone carboxylic acid (glutamine 1). A Chitin-binding type R&amp;R domain is found at 20-92 (DGSYQWNYET…PQGAHFPTPP (73 aa)). Residues threonine 90 and threonine 107 are each glycosylated (O-linked (HexNAc...) threonine). A glycan (O-linked (HexNAc...) serine) is linked at serine 110. The O-linked (HexNAc...) threonine glycan is linked to threonine 111. The residue at position 116 (proline 116) is a Proline amide.

In terms of biological role, component of the abdominal endocuticle. The protein is Endocuticle structural glycoprotein SgAbd-4 of Schistocerca gregaria (Desert locust).